The sequence spans 337 residues: Ketol-acid reductoisomerase (NADP(+)) (337 aa).

The KARI N-terminal Rossmann domain occupies 3–183 (IELLYDADAD…GGARAGVIPT (181 aa)). Residues 26 to 29 (YGSQ), arginine 49, serine 52, serine 54, and 84 to 87 (DTSQ) contribute to the NADP(+) site. Residue histidine 109 is part of the active site. An NADP(+)-binding site is contributed by glycine 135. The KARI C-terminal knotted domain maps to 184–329 (TFREETETDL…SKLRDLMSWV (146 aa)). Residues aspartate 192, glutamate 196, glutamate 228, and glutamate 232 each contribute to the Mg(2+) site. Substrate is bound at residue serine 253.

Belongs to the ketol-acid reductoisomerase family. It depends on Mg(2+) as a cofactor.

The catalysed reaction is (2R)-2,3-dihydroxy-3-methylbutanoate + NADP(+) = (2S)-2-acetolactate + NADPH + H(+). It catalyses the reaction (2R,3R)-2,3-dihydroxy-3-methylpentanoate + NADP(+) = (S)-2-ethyl-2-hydroxy-3-oxobutanoate + NADPH + H(+). The protein operates within amino-acid biosynthesis; L-isoleucine biosynthesis; L-isoleucine from 2-oxobutanoate: step 2/4. It participates in amino-acid biosynthesis; L-valine biosynthesis; L-valine from pyruvate: step 2/4. Functionally, involved in the biosynthesis of branched-chain amino acids (BCAA). Catalyzes an alkyl-migration followed by a ketol-acid reduction of (S)-2-acetolactate (S2AL) to yield (R)-2,3-dihydroxy-isovalerate. In the isomerase reaction, S2AL is rearranged via a Mg-dependent methyl migration to produce 3-hydroxy-3-methyl-2-ketobutyrate (HMKB). In the reductase reaction, this 2-ketoacid undergoes a metal-dependent reduction by NADPH to yield (R)-2,3-dihydroxy-isovalerate. The sequence is that of Ketol-acid reductoisomerase (NADP(+)) from Corynebacterium diphtheriae (strain ATCC 700971 / NCTC 13129 / Biotype gravis).